We begin with the raw amino-acid sequence, 452 residues long: UDP-N-acetylmuramoyl-L-alanine--L-glutamate ligase (452 aa).

118 to 124 (GSKGKST) is an ATP binding site.

This sequence belongs to the MurCDEF family. MurD2 subfamily.

It localises to the cytoplasm. The enzyme catalyses UDP-N-acetyl-alpha-D-muramoyl-L-alanine + L-glutamate + ATP = UDP-N-acetyl-alpha-D-muramoyl-L-alanyl-L-glutamate + ADP + phosphate + H(+). The protein operates within cell wall biogenesis; peptidoglycan biosynthesis. In terms of biological role, cell wall formation. Catalyzes the addition of L-glutamate to the nucleotide precursor UDP-N-acetylmuramoyl-L-alanine. In Micromonospora sp. (strain ATCC 39149 / NRRL 15099 / SCC 1413), this protein is UDP-N-acetylmuramoyl-L-alanine--L-glutamate ligase.